A 62-amino-acid polypeptide reads, in one-letter code: Potassium channel toxin alpha-KTx Tx790 (62 aa).

Residues 1 to 18 form the signal peptide; that stretch reads MQKLFIVLVLFCILRLDA. Disulfide bonds link cysteine 28-cysteine 46, cysteine 33-cysteine 59, and cysteine 37-cysteine 61.

It belongs to the short scorpion toxin superfamily. Potassium channel inhibitor family. Alpha-KTx 23 subfamily. As to expression, expressed by the venom gland.

The protein localises to the secreted. May block potassium channels. This chain is Potassium channel toxin alpha-KTx Tx790, found in Buthus israelis (Israeli scorpion).